The sequence spans 264 residues: Thymidylate synthase (264 aa).

Position 21 (arginine 21) interacts with dUMP. Position 51 (histidine 51) interacts with (6R)-5,10-methylene-5,6,7,8-tetrahydrofolate. 126 to 127 lines the dUMP pocket; sequence RR. The active-site Nucleophile is cysteine 146. Residues 166–169, asparagine 177, and 207–209 contribute to the dUMP site; these read RSCD and HLY. Aspartate 169 is a binding site for (6R)-5,10-methylene-5,6,7,8-tetrahydrofolate. A (6R)-5,10-methylene-5,6,7,8-tetrahydrofolate-binding site is contributed by alanine 263.

The protein belongs to the thymidylate synthase family. Bacterial-type ThyA subfamily. As to quaternary structure, homodimer.

It localises to the cytoplasm. The catalysed reaction is dUMP + (6R)-5,10-methylene-5,6,7,8-tetrahydrofolate = 7,8-dihydrofolate + dTMP. It functions in the pathway pyrimidine metabolism; dTTP biosynthesis. Catalyzes the reductive methylation of 2'-deoxyuridine-5'-monophosphate (dUMP) to 2'-deoxythymidine-5'-monophosphate (dTMP) while utilizing 5,10-methylenetetrahydrofolate (mTHF) as the methyl donor and reductant in the reaction, yielding dihydrofolate (DHF) as a by-product. This enzymatic reaction provides an intracellular de novo source of dTMP, an essential precursor for DNA biosynthesis. This Hamiltonella defensa subsp. Acyrthosiphon pisum (strain 5AT) protein is Thymidylate synthase.